A 340-amino-acid chain; its full sequence is SH2 domain-containing adapter protein D (340 aa).

Disordered regions lie at residues Met1–Arg77, Gly94–Glu186, and Val198–Asp230. The segment covering Glu98–Asp108 has biased composition (acidic residues). Over residues Pro171–Glu186 the composition is skewed to basic and acidic residues. Positions Trp240–Val335 constitute an SH2 domain.

Tyrosine phosphorylated by ABL.

May function as an adapter protein. In Homo sapiens (Human), this protein is SH2 domain-containing adapter protein D (SHD).